A 1671-amino-acid polypeptide reads, in one-letter code: Hybrid signal transduction protein dokA (1671 aa).

Basic and acidic residues predominate over residues 1–10 (MSSPHIELHS). 6 disordered regions span residues 1–27 (MSSPHIELHSQRTLSPQPSSNNFELTG), 42–89 (DDLN…DKND), 126–241 (QQQQ…RRSS), 365–451 (YSNN…NNEE), 579–603 (HNHNHHNHNHNNTTQRASSTDSPFI), and 629–651 (SNSSSNSNNNSNNASSSNCSSNA). Residues 11-27 (QRTLSPQPSSNNFELTG) show a composition bias toward polar residues. 2 stretches are compositionally biased toward low complexity: residues 45–83 (NNNNNNNNNNNNNNNNNNNNNNNNNNNNNNNNNNNNNNN) and 126–167 (QQQQ…QQQE). Residues 168–179 (QEQEQEQEQEQE) show a composition bias toward acidic residues. Low complexity predominate over residues 367 to 449 (NNNNNTNTNN…NNNNNNNNNN (83 aa)). Polar residues predominate over residues 591-600 (TTQRASSTDS). A Histidine kinase domain is found at 1050-1276 (NISHELRTPC…TFWFAIKVSI (227 aa)). The region spanning 1519–1633 (YILVAEDNDI…RLQKTLSDWI (115 aa)) is the Response regulatory domain.

Post-translationally, under osmotic stress conditions, this protein undergoes phosphorylation at a serine residue in the kinase core, which is not due to an autophosphorylation of dokA. This is in contrast to the classic two-component paradigm, which predicts only histidine and aspartate phosphorylation.

Functionally, part of the osmoregulatory pathway which leads to the increase of intracellular cAMP concentration in response to hyperosmotic stress. Thought to negatively regulate the rdeA-regA pathway by acting as a phosphatase towards the HPt protein rdeA. Has probably no histidine kinase activity. This Dictyostelium discoideum (Social amoeba) protein is Hybrid signal transduction protein dokA (dokA).